Here is a 234-residue protein sequence, read N- to C-terminus: Sugar fermentation stimulation protein homolog (234 aa).

It belongs to the SfsA family.

The sequence is that of Sugar fermentation stimulation protein homolog from Shewanella sp. (strain MR-4).